We begin with the raw amino-acid sequence, 882 residues long: Translation initiation factor IF-2 (882 aa).

The interval 38–294 (IEDSQASWVK…KSKHKRKKEN (257 aa)) is disordered. Composition is skewed to basic and acidic residues over residues 66 to 76 (TRDEAVKKHSG), 109 to 128 (GRRE…ERHS), and 207 to 219 (PDNK…DAKR). The segment covering 282-292 (PGRKSKHKRKK) has biased composition (basic residues). A tr-type G domain is found at 383–556 (ARPPVVTIMG…EMNEIRANPD (174 aa)). The interval 392–399 (GHVDHGKT) is G1. A GTP-binding site is contributed by 392–399 (GHVDHGKT). The segment at 417 to 421 (GITQH) is G2. The tract at residues 438–441 (DTPG) is G3. GTP is bound by residues 438-442 (DTPGH) and 492-495 (NKID). Residues 492-495 (NKID) are G4. The interval 528-530 (SAK) is G5.

Belongs to the TRAFAC class translation factor GTPase superfamily. Classic translation factor GTPase family. IF-2 subfamily.

Its subcellular location is the cytoplasm. Its function is as follows. One of the essential components for the initiation of protein synthesis. Protects formylmethionyl-tRNA from spontaneous hydrolysis and promotes its binding to the 30S ribosomal subunits. Also involved in the hydrolysis of GTP during the formation of the 70S ribosomal complex. In Syntrophomonas wolfei subsp. wolfei (strain DSM 2245B / Goettingen), this protein is Translation initiation factor IF-2.